A 220-amino-acid polypeptide reads, in one-letter code: GTP cyclohydrolase 1 (220 aa).

Zn(2+) contacts are provided by cysteine 109, histidine 112, and cysteine 180.

Belongs to the GTP cyclohydrolase I family. As to quaternary structure, homomer.

It catalyses the reaction GTP + H2O = 7,8-dihydroneopterin 3'-triphosphate + formate + H(+). Its pathway is cofactor biosynthesis; 7,8-dihydroneopterin triphosphate biosynthesis; 7,8-dihydroneopterin triphosphate from GTP: step 1/1. The polypeptide is GTP cyclohydrolase 1 (Pectobacterium carotovorum subsp. carotovorum (strain PC1)).